Reading from the N-terminus, the 540-residue chain is Medium/long-chain-fatty-acid--[acyl-carrier-protein] ligase FadD10 (540 aa).

T177 serves as a coordination point for Mg(2+). ATP is bound by residues I226, V316, and S320. E321 lines the Mg(2+) pocket. An ATP-binding site is contributed by D408.

It belongs to the ATP-dependent AMP-binding enzyme family. As to quaternary structure, homodimer. It depends on Mg(2+) as a cofactor.

The protein localises to the cytoplasm. The catalysed reaction is a medium-chain fatty acid + holo-[ACP] + ATP = a medium-chain fatty acyl-[ACP] + AMP + diphosphate. It carries out the reaction a medium-chain fatty acid + ATP + H(+) = a medium-chain fatty acyl-AMP + diphosphate. It catalyses the reaction a medium-chain fatty acyl-AMP + holo-[ACP] = a medium-chain fatty acyl-[ACP] + AMP + H(+). The enzyme catalyses a long-chain fatty acid + holo-[ACP] + ATP = a long-chain fatty acyl-[ACP] + AMP + diphosphate. The catalysed reaction is a long-chain fatty acid + ATP + H(+) = a long-chain fatty acyl-AMP + diphosphate. It carries out the reaction a long-chain fatty acyl-AMP + holo-[ACP] = a long-chain fatty acyl-[ACP] + AMP + H(+). It catalyses the reaction a (2E)-enoyl fatty acid + holo-[ACP] + ATP = a (2E)-enoyl-[ACP] + AMP + diphosphate. The enzyme catalyses a (2E)-enoyl fatty acid + ATP + H(+) = a (2E)-2-fatty-enoyl-AMP + diphosphate. The catalysed reaction is a (2E)-2-fatty-enoyl-AMP + holo-[ACP] = a (2E)-enoyl-[ACP] + AMP + H(+). It carries out the reaction a (3R)-3-isocyanyl-fatty acid + holo-[ACP] + ATP = a (3R)-3-isocyanyl-fatty acyl-[ACP] + AMP + diphosphate. It catalyses the reaction a (3R)-3-isocyanyl-fatty acid + ATP + H(+) = a (3R)-3-isocyanyl-fatty acyl-AMP + diphosphate. The enzyme catalyses a (3R)-3-isocyanyl-fatty acyl-AMP + holo-[ACP] = a (3R)-3-isocyanyl-fatty acyl-[ACP] + AMP + H(+). It participates in lipid metabolism; fatty acid metabolism. Acyl:acyl-carrier protein ligase involved in the biosynthesis of a unique class of isonitrile lipopeptides (INLPs) that seem to function as virulence factors in M.tuberculosis and to play a role in metal acquisition. Catalyzes the activation of medium/long-chain fatty acids as acyl-adenylates (acyl-AMP), which are then transferred to the phosphopantetheine arm of the acyl-carrier protein (ACP) MT0109. Acts twice during the INLP pathway, catalyzing the activation of a (2E)-enoyl fatty acid as well as the corresponding (3R)-3-isocyanyl-fatty acid as acyl-adenylates (acyl-AMP), and then the acyl transfer to the dedicated acyl-carrier protein MT0109. The sequence is that of Medium/long-chain-fatty-acid--[acyl-carrier-protein] ligase FadD10 (fadD10) from Mycobacterium tuberculosis (strain CDC 1551 / Oshkosh).